The primary structure comprises 137 residues: uncharacterized protein (137 aa).

A signal peptide spans 1–19; sequence MVAFYGIFLFGTVYLFGLA.

This is an uncharacterized protein from Acanthamoeba polyphaga (Amoeba).